The following is a 259-amino-acid chain: Phosphate import ATP-binding protein PstB 1 (259 aa).

Positions 13-254 (IETKDVDLFY…PAEKETEDYI (242 aa)) constitute an ABC transporter domain. 45–52 (GPSGCGKS) is a binding site for ATP.

It belongs to the ABC transporter superfamily. Phosphate importer (TC 3.A.1.7) family. The complex is composed of two ATP-binding proteins (PstB), two transmembrane proteins (PstC and PstA) and a solute-binding protein (PstS).

Its subcellular location is the cell membrane. It catalyses the reaction phosphate(out) + ATP + H2O = ADP + 2 phosphate(in) + H(+). Functionally, part of the ABC transporter complex PstSACB involved in phosphate import. Responsible for energy coupling to the transport system. The protein is Phosphate import ATP-binding protein PstB 1 of Listeria innocua serovar 6a (strain ATCC BAA-680 / CLIP 11262).